A 156-amino-acid polypeptide reads, in one-letter code: MSTSRLYTLVLVLQPQRVLLGMKKRGFGAGRWNGFGGKVQEGETIEDGAKRELLEESGLSVDTLHKVGHISFEFVGSPELMDVHIFSADHVHGTPTESEEMRPQWFQLDQIPFADLWPDDSYWFPLLLQKKKFCGHFKFQDQDTILSYSLREVDSF.

Residues 3-132 (TSRLYTLVLV…WFPLLLQKKK (130 aa)) form the Nudix hydrolase domain. 2-oxo-dATP is bound at residue Thr-8. Residues Thr-8, Lys-23, Asn-33, 35–38 (FGGK), and Glu-52 contribute to the 8-oxo-dGTP site. 2-oxo-dATP-binding positions include Asn-33 and 35–38 (FGGK). Mg(2+)-binding residues include Gly-36, Glu-52, Glu-55, Glu-56, and Glu-100. The short motif at 37–58 (GKVQEGETIEDGAKRELLEESG) is the Nudix box element. 8-oxo-dGTP-binding positions include Glu-56, Glu-100, and 117–120 (WPDD). Position 117-120 (117-120 (WPDD)) interacts with 2-oxo-dATP.

Belongs to the Nudix hydrolase family. Monomer. Mg(2+) is required as a cofactor. As to expression, high expression levels detected in thymus, liver, spleen, kidney, testis and large intestine, with lower levels detected in brain, heart, lung and stomach (at protein level). Expressed in kidney, liver and small intestine.

The protein localises to the cytoplasm. It is found in the nucleus. It localises to the nucleus membrane. Its subcellular location is the cytoplasmic vesicle. The protein resides in the secretory vesicle. The protein localises to the acrosome. The catalysed reaction is 2-oxo-dATP + H2O = 2-oxo-dAMP + diphosphate + H(+). It catalyses the reaction 2-oxo-ATP + H2O = 2-oxo-AMP + diphosphate + H(+). The enzyme catalyses 8-oxo-dGTP + H2O = 8-oxo-dGMP + diphosphate + H(+). It carries out the reaction 8-oxo-dATP + H2O = 8-oxo-dAMP + diphosphate + H(+). The catalysed reaction is O(6)-methyl-dGTP + H2O = O(6)-methyl-dGMP + diphosphate + H(+). It catalyses the reaction N(6)-methyl-dATP + H2O = N(6)-methyl-dAMP + diphosphate + H(+). The enzyme catalyses N(6)-methyl-ATP + H2O = N(6)-methyl-AMP + diphosphate + H(+). Oxidized purine nucleoside triphosphate hydrolase which is a prominent sanitizer of the oxidized nucleotide pool. Catalyzes the hydrolysis of 2-oxo-dATP (2-hydroxy-dATP) into 2-oxo-dAMP. Also has a significant hydrolase activity toward 2-oxo-ATP, 8-oxo-dGTP and 8-oxo-dATP. Through the hydrolysis of oxidized purine nucleoside triphosphates, prevents their incorporation into DNA and the subsequent transversions A:T to C:G and G:C to T:A. Also catalyzes the hydrolysis of methylated purine nucleoside triphosphate preventing their integration into DNA. Through this antimutagenic activity protects cells from oxidative stress. The protein is Oxidized purine nucleoside triphosphate hydrolase (Nudt1) of Mus musculus (Mouse).